A 394-amino-acid polypeptide reads, in one-letter code: 8-amino-7-oxononanoate synthase (394 aa).

Arginine 18 is a binding site for substrate. 105-106 (GY) is a binding site for pyridoxal 5'-phosphate. Residue histidine 130 participates in substrate binding. Residues serine 175, histidine 203, and threonine 232 each contribute to the pyridoxal 5'-phosphate site. Lysine 235 bears the N6-(pyridoxal phosphate)lysine mark. Threonine 349 is a substrate binding site.

The protein belongs to the class-II pyridoxal-phosphate-dependent aminotransferase family. BioF subfamily. In terms of assembly, homodimer. Requires pyridoxal 5'-phosphate as cofactor.

The enzyme catalyses 6-carboxyhexanoyl-[ACP] + L-alanine + H(+) = (8S)-8-amino-7-oxononanoate + holo-[ACP] + CO2. It functions in the pathway cofactor biosynthesis; biotin biosynthesis. Its function is as follows. Catalyzes the decarboxylative condensation of pimeloyl-[acyl-carrier protein] and L-alanine to produce 8-amino-7-oxononanoate (AON), [acyl-carrier protein], and carbon dioxide. This chain is 8-amino-7-oxononanoate synthase, found in Marinobacter nauticus (strain ATCC 700491 / DSM 11845 / VT8) (Marinobacter aquaeolei).